The chain runs to 454 residues: Tol-Pal system protein TolB (454 aa).

The first 21 residues, 1–21 (MSLRPISLMLALLLTSAPALA), serve as a signal peptide directing secretion.

This sequence belongs to the TolB family. In terms of assembly, the Tol-Pal system is composed of five core proteins: the inner membrane proteins TolA, TolQ and TolR, the periplasmic protein TolB and the outer membrane protein Pal. They form a network linking the inner and outer membranes and the peptidoglycan layer.

It localises to the periplasm. Functionally, part of the Tol-Pal system, which plays a role in outer membrane invagination during cell division and is important for maintaining outer membrane integrity. The sequence is that of Tol-Pal system protein TolB from Sphingopyxis alaskensis (strain DSM 13593 / LMG 18877 / RB2256) (Sphingomonas alaskensis).